Reading from the N-terminus, the 381-residue chain is Cobalt-precorrin-5B C(1)-methyltransferase (381 aa).

This sequence belongs to the CbiD family.

It catalyses the reaction Co-precorrin-5B + S-adenosyl-L-methionine = Co-precorrin-6A + S-adenosyl-L-homocysteine. It functions in the pathway cofactor biosynthesis; adenosylcobalamin biosynthesis; cob(II)yrinate a,c-diamide from sirohydrochlorin (anaerobic route): step 6/10. Its function is as follows. Catalyzes the methylation of C-1 in cobalt-precorrin-5B to form cobalt-precorrin-6A. The sequence is that of Cobalt-precorrin-5B C(1)-methyltransferase from Prochlorococcus marinus (strain SARG / CCMP1375 / SS120).